We begin with the raw amino-acid sequence, 153 residues long: Transcriptional repressor NrdR 3 (153 aa).

Residues 1–26 (MRCPFCGHDDTQVKDSRPTEDNSAIR) are disordered. A zinc finger spans residues 3-34 (CPFCGHDDTQVKDSRPTEDNSAIRRRRSCPEC). Over residues 7-24 (GHDDTQVKDSRPTEDNSA) the composition is skewed to basic and acidic residues. One can recognise an ATP-cone domain in the interval 49-139 (LVVIKKDGGR…VYRNFREAKD (91 aa)).

The protein belongs to the NrdR family. Requires Zn(2+) as cofactor.

In terms of biological role, negatively regulates transcription of bacterial ribonucleotide reductase nrd genes and operons by binding to NrdR-boxes. The sequence is that of Transcriptional repressor NrdR 3 from Paramagnetospirillum magneticum (strain ATCC 700264 / AMB-1) (Magnetospirillum magneticum).